The chain runs to 44 residues: uncharacterized protein (44 aa).

Its subcellular location is the plastid. The protein localises to the chloroplast. This is an uncharacterized protein from Trieres chinensis (Marine centric diatom).